Here is a 313-residue protein sequence, read N- to C-terminus: N-acetyl-gamma-glutamyl-phosphate reductase (313 aa).

Residue cysteine 117 is part of the active site.

It belongs to the NAGSA dehydrogenase family. Type 2 subfamily.

The protein resides in the cytoplasm. The catalysed reaction is N-acetyl-L-glutamate 5-semialdehyde + phosphate + NADP(+) = N-acetyl-L-glutamyl 5-phosphate + NADPH + H(+). It participates in amino-acid biosynthesis; L-arginine biosynthesis; N(2)-acetyl-L-ornithine from L-glutamate: step 3/4. Functionally, catalyzes the NADPH-dependent reduction of N-acetyl-5-glutamyl phosphate to yield N-acetyl-L-glutamate 5-semialdehyde. The sequence is that of N-acetyl-gamma-glutamyl-phosphate reductase from Burkholderia cenocepacia (strain HI2424).